Here is a 162-residue protein sequence, read N- to C-terminus: Phosphopantetheine adenylyltransferase (162 aa).

Serine 11 contacts substrate. Residues 11–12 and histidine 19 contribute to the ATP site; that span reads SF. The substrate site is built by lysine 43, valine 76, and arginine 90. ATP contacts are provided by residues 91-93, glutamate 101, and 126-132; these read GLR and HLYISSS.

Belongs to the bacterial CoaD family. As to quaternary structure, homohexamer. It depends on Mg(2+) as a cofactor.

It localises to the cytoplasm. It carries out the reaction (R)-4'-phosphopantetheine + ATP + H(+) = 3'-dephospho-CoA + diphosphate. Its pathway is cofactor biosynthesis; coenzyme A biosynthesis; CoA from (R)-pantothenate: step 4/5. Its function is as follows. Reversibly transfers an adenylyl group from ATP to 4'-phosphopantetheine, yielding dephospho-CoA (dPCoA) and pyrophosphate. The sequence is that of Phosphopantetheine adenylyltransferase from Streptococcus pneumoniae (strain Hungary19A-6).